The following is a 1014-amino-acid chain: Klotho (1014 aa).

A signal peptide spans 1-35; it reads MPASAPPRRPRPPPPSLSLSLLLVLLGLAGRRLRA. The Extracellular segment spans residues 36 to 983; the sequence is EPGDGAQTWA…ECSFFHTRKP (948 aa). Glycosyl hydrolase-1 regions lie at residues 59 to 508 and 517 to 955; these read FQGT…KNGF and LEGT…SNGF. N-linked (GlcNAc...) asparagine glycans are attached at residues N161, N285, N346, N609, N614, and N696. The helical transmembrane segment at 984-1004 threads the bilayer; that stretch reads LVAFIAFLFFAFIVSLSLIFY. Over 1005 to 1014 the chain is Cytoplasmic; that stretch reads YSKKGRRRYQ.

This sequence belongs to the glycosyl hydrolase 1 family. Klotho subfamily. Homodimer. Interacts with FGF23 and FGFR1.

The protein localises to the cell membrane. The protein resides in the apical cell membrane. Its subcellular location is the secreted. It carries out the reaction a beta-D-glucuronoside + H2O = D-glucuronate + an alcohol. In terms of biological role, may have weak glycosidase activity towards glucuronylated steroids. However, it lacks essential active site Glu residues at positions 241 and 874, suggesting it may be inactive as a glycosidase in vivo. May be involved in the regulation of calcium and phosphorus homeostasis by inhibiting the synthesis of active vitamin D. Essential factor for the specific interaction between FGF23 and FGFR1. The Klotho peptide generated by cleavage of the membrane-bound isoform may be an anti-aging circulating hormone which would extend life span by inhibiting insulin/IGF1 signaling. This is Klotho (KL) from Macaca fascicularis (Crab-eating macaque).